Reading from the N-terminus, the 265-residue chain is Tryptophan synthase alpha chain (265 aa).

Active-site proton acceptor residues include E49 and E60.

This sequence belongs to the TrpA family. In terms of assembly, tetramer of two alpha and two beta chains.

The enzyme catalyses (1S,2R)-1-C-(indol-3-yl)glycerol 3-phosphate + L-serine = D-glyceraldehyde 3-phosphate + L-tryptophan + H2O. It participates in amino-acid biosynthesis; L-tryptophan biosynthesis; L-tryptophan from chorismate: step 5/5. In terms of biological role, the alpha subunit is responsible for the aldol cleavage of indoleglycerol phosphate to indole and glyceraldehyde 3-phosphate. This is Tryptophan synthase alpha chain from Herminiimonas arsenicoxydans.